The chain runs to 54 residues: uncharacterized protein (54 aa).

Residues 32-52 traverse the membrane as a helical segment; sequence LFSLLVLIILCFIDPILFYFI.

The protein resides in the host membrane. This is an uncharacterized protein from Cassava vein mosaic virus (CsVMV).